Here is a 379-residue protein sequence, read N- to C-terminus: Mannitol-1-phosphate 5-dehydrogenase (379 aa).

3–14 is an NAD(+) binding site; sequence ALHFGAGNIGRG.

This sequence belongs to the mannitol dehydrogenase family.

The catalysed reaction is D-mannitol 1-phosphate + NAD(+) = beta-D-fructose 6-phosphate + NADH + H(+). This chain is Mannitol-1-phosphate 5-dehydrogenase, found in Actinobacillus pleuropneumoniae serotype 3 (strain JL03).